A 125-amino-acid chain; its full sequence is MFTSSKVAIQVQSVYIESQSSPEEQRYVFAYTITIHNLNKHAIRLLRRYWLITNAQGNTTEVQGEGVVGEQPLIEAGSRYRYTSGAVLETPMGTMEGHYEMIDAQGRLFQIDIPVFRLAIPTLIN.

The 125-residue stretch at 1–125 (MFTSSKVAIQ…FRLAIPTLIN (125 aa)) folds into the ApaG domain.

In Proteus mirabilis (strain HI4320), this protein is Protein ApaG.